The following is a 263-amino-acid chain: Indole-3-glycerol phosphate synthase (263 aa).

This sequence belongs to the TrpC family.

The catalysed reaction is 1-(2-carboxyphenylamino)-1-deoxy-D-ribulose 5-phosphate + H(+) = (1S,2R)-1-C-(indol-3-yl)glycerol 3-phosphate + CO2 + H2O. The protein operates within amino-acid biosynthesis; L-tryptophan biosynthesis; L-tryptophan from chorismate: step 4/5. The protein is Indole-3-glycerol phosphate synthase of Aliarcobacter butzleri (strain RM4018) (Arcobacter butzleri).